The sequence spans 238 residues: Ribonuclease PH (238 aa).

Residues Arg-86 and 124-126 (GTR) each bind phosphate.

Belongs to the RNase PH family. As to quaternary structure, homohexameric ring arranged as a trimer of dimers.

It carries out the reaction tRNA(n+1) + phosphate = tRNA(n) + a ribonucleoside 5'-diphosphate. In terms of biological role, phosphorolytic 3'-5' exoribonuclease that plays an important role in tRNA 3'-end maturation. Removes nucleotide residues following the 3'-CCA terminus of tRNAs; can also add nucleotides to the ends of RNA molecules by using nucleoside diphosphates as substrates, but this may not be physiologically important. Probably plays a role in initiation of 16S rRNA degradation (leading to ribosome degradation) during starvation. The chain is Ribonuclease PH from Aliivibrio salmonicida (strain LFI1238) (Vibrio salmonicida (strain LFI1238)).